We begin with the raw amino-acid sequence, 136 residues long: Diuretic hormone 41 (136 aa).

Residues 1–26 form the signal peptide; that stretch reads MMWWAVWCAAMVAGSVFTAAAPPTDS. Residues 27-76 constitute a propeptide that is removed on maturation; that stretch reads IDLMQMDPSLADDESLGFAMQSLSGRYAAAPWLYLLADVSHDPQNGSDRV. At isoleucine 119 the chain carries Isoleucine amide. Residues 123–136 constitute a propeptide that is removed on maturation; it reads GFHWAPSAKAAKFY.

This sequence belongs to the sauvagine/corticotropin-releasing factor/urotensin I family.

The protein localises to the secreted. Functionally, regulation of fluid secretion. The protein is Diuretic hormone 41 (dh41) of Bombyx mori (Silk moth).